The chain runs to 131 residues: Large ribosomal subunit protein bL12 (131 aa).

It belongs to the bacterial ribosomal protein bL12 family. As to quaternary structure, homodimer. Part of the ribosomal stalk of the 50S ribosomal subunit. Forms a multimeric L10(L12)X complex, where L10 forms an elongated spine to which 2 to 4 L12 dimers bind in a sequential fashion. Binds GTP-bound translation factors.

Functionally, forms part of the ribosomal stalk which helps the ribosome interact with GTP-bound translation factors. Is thus essential for accurate translation. The protein is Large ribosomal subunit protein bL12 of Prochlorococcus marinus (strain MIT 9301).